Consider the following 62-residue polypeptide: Prokaryotic ubiquitin-like protein Pup (62 aa).

Residues 1–29 (MSQQSLNAPGPGAEDGNDPEAVTGGQTFA) are disordered. The tract at residues 21–56 (AVTGGQTFASAQAADDLLDEIDSVLESNAETFVRSF) is ARC ATPase binding. Position 62 is a deamidated glutamine (Q62). Q62 participates in a covalent cross-link: Isoglutamyl lysine isopeptide (Gln-Lys) (interchain with K-? in acceptor proteins).

Belongs to the prokaryotic ubiquitin-like protein family. Strongly interacts with the proteasome-associated ATPase ARC through a hydrophobic interface; the interacting region of Pup lies in its C-terminal half. There is one Pup binding site per ARC hexamer ring. Is modified by deamidation of its C-terminal glutamine to glutamate by the deamidase Dop, a prerequisite to the subsequent pupylation process.

It functions in the pathway protein degradation; proteasomal Pup-dependent pathway. Protein modifier that is covalently attached to lysine residues of substrate proteins, thereby targeting them for proteasomal degradation. The tagging system is termed pupylation. The sequence is that of Prokaryotic ubiquitin-like protein Pup from Brachybacterium faecium (strain ATCC 43885 / DSM 4810 / JCM 11609 / LMG 19847 / NBRC 14762 / NCIMB 9860 / 6-10).